Consider the following 231-residue polypeptide: Lactate utilization protein C (231 aa).

Belongs to the LutC/YkgG family.

Functionally, is involved in L-lactate degradation and allows cells to grow with lactate as the sole carbon source. The sequence is that of Lactate utilization protein C from Macrococcus caseolyticus (strain JCSC5402) (Macrococcoides caseolyticum).